A 282-amino-acid polypeptide reads, in one-letter code: Heme oxygenase 1, chloroplastic (282 aa).

The transit peptide at M1–V54 directs the protein to the chloroplast. H86 provides a ligand contact to heme b.

This sequence belongs to the heme oxygenase family. Widely expressed.

The protein resides in the plastid. The protein localises to the chloroplast. The catalysed reaction is heme b + 3 reduced [NADPH--hemoprotein reductase] + 3 O2 = biliverdin IXalpha + CO + Fe(2+) + 3 oxidized [NADPH--hemoprotein reductase] + 3 H2O + H(+). Activated by ascorbate. In terms of biological role, key enzyme in the synthesis of the chromophore of the phytochrome family of plant photoreceptors. Catalyzes the opening of the heme ring to form the open-chain tetrapyrrole biliverdin IX with the release of iron and carbon monoxide (CO). Produces specifically the biliverdin IX-alpha isomer. Can form complex with heme, is ferredoxin-dependent and its activity is increased in the presence of ascorbate. Plays a role in salt acclimation signaling. May affect the plastid-to-nucleus signaling pathway by perturbing tetrapyrrole synthesis. The plastid-to-nucleus signal plays an important role in the coordinated expression of both nuclear- and chloroplast-localized genes that encode photosynthesis-related proteins. This is Heme oxygenase 1, chloroplastic (HO1) from Arabidopsis thaliana (Mouse-ear cress).